Reading from the N-terminus, the 113-residue chain is Carboxysome shell protein CcmK1 (113 aa).

The region spanning 4 to 90 is the BMC domain; the sequence is AVGMIETLGF…PHENLEYVLP (87 aa).

This sequence belongs to the bacterial microcompartments protein family. CcmK subfamily. In terms of assembly, homohexamer. Interacts preferentially with CcmK2 and CcmK4a rather than itself in vitro.

Its subcellular location is the carboxysome. Its function is as follows. One of the shell proteins of the carboxysome, a polyhedral inclusion where RuBisCO (ribulose bisphosphate carboxylase, rbcL-rbcS) is sequestered. Assembles into hexamers which make sheets that form the facets of the polyhedral carboxysome. The hexamer central pore probably regulates metabolite flux. This Thermosynechococcus vestitus (strain NIES-2133 / IAM M-273 / BP-1) protein is Carboxysome shell protein CcmK1.